The sequence spans 1087 residues: Voltage-gated inwardly rectifying potassium channel KCNH3 (1087 aa).

Over 1–228 (MPAMRGLLAP…HCGALRATWD (228 aa)) the chain is Cytoplasmic. The region spanning 18–90 (IATRFDGTHS…QQIRKALDEH (73 aa)) is the PAS domain. The 53-residue stretch at 93-145 (FKAELILYRKSGLPFWCLLDVIPIKNEKGEVALFLVSHKDISETKNRGGPDNW) folds into the PAC domain. Over residues 137–150 (KNRGGPDNWKERGG) the composition is skewed to basic and acidic residues. Residues 137–161 (KNRGGPDNWKERGGGRRRYGRAGSK) are disordered. The helical transmembrane segment at 229 to 249 (GFILLATLYVAVTVPYSVCVS) threads the bilayer. At 250–259 (TAREPSAARG) the chain is on the extracellular side. Residues 260-280 (PPSVCDLAVEVLFILDIVLNF) form a helical membrane-spanning segment. Residues 281-302 (RTTFVSKSGQVVFAPKSICLHY) lie on the Cytoplasmic side of the membrane. Residues 303 to 323 (VTTWFLLDVIAALPFDLLHAF) form a helical membrane-spanning segment. Topologically, residues 324–331 (KVNVYVGA) are extracellular. The helical; Voltage-sensor transmembrane segment at 332 to 352 (HLLKTVRLLRLLRLLPRLDRY) threads the bilayer. The Cytoplasmic portion of the chain corresponds to 353–361 (SQYSAVVLT). Residues 362-382 (LLMAVFALLAHWVACVWFYIG) form a helical membrane-spanning segment. At 383–456 (QQEIENSESE…GGPSLRSAYI (74 aa)) the chain is on the extracellular side. The segment at 416–436 (SPDGGNSSGQSENCSSSGGGS) is disordered. A compositionally biased stretch (low complexity) spans 419–431 (GGNSSGQSENCSS). N-linked (GlcNAc...) asparagine glycosylation is found at Asn-421, Asn-428, and Asn-439. Positions 457 to 477 (TSLYFALSSLTSVGFGNVSAN) form an intramembrane region, pore-forming. Residues 468–473 (SVGFGN) carry the Selectivity filter motif. Residues 478–482 (TDTEK) are Extracellular-facing. A helical membrane pass occupies residues 483–503 (IFSICTMLIGALMHAVVFGNV). Over 504-1087 (TAIIQRMYAR…QWTQEEGTGV (584 aa)) the chain is Cytoplasmic. 585–700 (LFEAASRGCL…FAPRFSRGLR (116 aa)) provides a ligand contact to a nucleoside 3',5'-cyclic phosphate. Disordered stretches follow at residues 733–813 (EKET…LQLP) and 975–1061 (LMAP…PWDP). The segment covering 776–788 (TAPRPRLGGRGRP) has biased composition (basic residues).

The protein belongs to the potassium channel family. H (Eag) (TC 1.A.1.20) subfamily. Kv12.2/KCNH3 sub-subfamily. The potassium channel is probably composed of a homo- or heterotetrameric complex of pore-forming alpha subunits that can associate with modulating beta subunits. Interacts with KCNE1 and KCNE3; these interactions regulate KCNH3 trafficking to the plasma membrane and its subsequent voltage-gated potassium channel activity. Post-translationally, N-glycosylated. N-glycosylation mediates traffick to the cell membrane but is not necessary for voltage-gated potassium channel activity. In terms of tissue distribution, highly expressed in adult and embryonic brain, in particular in cerebellum, brain stem, hippocampus, cortex and striatum. Also found in pituitary.

It localises to the cell membrane. It catalyses the reaction K(+)(in) = K(+)(out). Its function is as follows. Pore-forming (alpha) subunit of a voltage-gated inwardly rectifying potassium channel. Charactherized by a fast rate of activation during depolarization followed by a rapid inactivation at much more depolarized value causing inward rectification due to a C-type inactivation mechanism. Exhibits a rapid recovery from inactivation. This chain is Voltage-gated inwardly rectifying potassium channel KCNH3, found in Rattus norvegicus (Rat).